The chain runs to 127 residues: Large ribosomal subunit protein bL17 (127 aa).

The protein belongs to the bacterial ribosomal protein bL17 family. As to quaternary structure, part of the 50S ribosomal subunit. Contacts protein L32.

The sequence is that of Large ribosomal subunit protein bL17 from Legionella pneumophila (strain Paris).